A 233-amino-acid chain; its full sequence is DNA repair protein RecO (233 aa).

This sequence belongs to the RecO family.

Involved in DNA repair and RecF pathway recombination. The protein is DNA repair protein RecO of Pseudomonas aeruginosa (strain LESB58).